A 151-amino-acid polypeptide reads, in one-letter code: Transcriptional regulator MraZ (151 aa).

2 SpoVT-AbrB domains span residues 5 to 52 (ATAV…PLMN) and 81 to 124 (ATEC…SDVE).

Belongs to the MraZ family. In terms of assembly, forms oligomers.

It localises to the cytoplasm. Its subcellular location is the nucleoid. In Haemophilus influenzae (strain PittGG), this protein is Transcriptional regulator MraZ.